Reading from the N-terminus, the 442-residue chain is tRNA modification GTPase MnmE (442 aa).

3 residues coordinate (6S)-5-formyl-5,6,7,8-tetrahydrofolate: Arg24, Glu82, and Lys120. In terms of domain architecture, TrmE-type G spans 217–367; that stretch reads GLHIVITGEP…LISLIKEKAE (151 aa). GTP-binding positions include 227–232, 246–252, and 271–274; these read NVGKST, SEYAGTT, and DTAG. 2 residues coordinate Mg(2+): Ser231 and Thr252. (6S)-5-formyl-5,6,7,8-tetrahydrofolate is bound at residue Lys442.

It belongs to the TRAFAC class TrmE-Era-EngA-EngB-Septin-like GTPase superfamily. TrmE GTPase family. In terms of assembly, homodimer. Heterotetramer of two MnmE and two MnmG subunits. It depends on K(+) as a cofactor.

The protein resides in the cytoplasm. Exhibits a very high intrinsic GTPase hydrolysis rate. Involved in the addition of a carboxymethylaminomethyl (cmnm) group at the wobble position (U34) of certain tRNAs, forming tRNA-cmnm(5)s(2)U34. This Wolbachia sp. subsp. Drosophila simulans (strain wRi) protein is tRNA modification GTPase MnmE.